A 698-amino-acid polypeptide reads, in one-letter code: Interleukin enhancer-binding factor 3 (698 aa).

Positions 5–379 (RIFLNDDRHV…ALKRPMEEDG (375 aa)) constitute a DZF domain. 3 disordered regions span residues 51 to 88 (QQEK…PTRT), 374 to 403 (PMEE…PPQA), and 473 to 522 (EEKE…KHGK). Positions 61 to 71 (EQPEPEEPETT) are enriched in acidic residues. Basic and acidic residues-rich tracts occupy residues 72–81 (EEGKDSEGKT) and 374–384 (PMEEDGEDKSP). Positions 372 to 390 (KRPMEEDGEDKSPSKKKKK) match the Bipartite nuclear localization signal motif. Residues 399–468 (EPPQAMNALM…AVKVLQDMGL (70 aa)) form the DRBM 1 domain. Positions 490-503 (TPAQPADSTQTDSA) are enriched in polar residues. In terms of domain architecture, DRBM 2 spans 520-586 (HGKNPVMELN…ALAALEKLFP (67 aa)).

A component of a ybx2/frgy2-containing mRNA-ribonucleoprotein (mRNP) complex. Also a component of the CCAAT box transcription factor (CBTF) complex. In terms of processing, phosphorylated. Phosphorylation affects nuclear translocation. Methylated by protein arginine N-methyltransferase 1 (prmt1b) in the RGG-rich domain. Methylation decreases DNA-binding and thereby decreases transcription of the gata2 gene, but does not regulate dsRNA binding or subcellular localization.

The protein resides in the nucleus. It localises to the cytoplasm. Its function is as follows. RNA-binding protein that plays an essential role in the biogenesis of circular RNAs (circRNAs) which are produced by back-splicing circularization of pre-mRNAs. Within the nucleus, promotes circRNAs processing by stabilizing the regulatory elements residing in the flanking introns of the circularized exons. Plays thereby a role in the back-splicing of a subset of circRNAs. As a consequence, participates in a wide range of transcriptional and post-transcriptional processes. Binds to poly-U elements and AU-rich elements (AREs) in the 3'-UTR of target mRNAs. Upon viral infection, ILF3 accumulates in the cytoplasm and participates in the innate antiviral response. Mechanistically, ILF3 becomes phosphorylated and activated by the double-stranded RNA-activated protein kinase/PKR which releases ILF3 from cellular mature circRNAs. In turn, unbound ILF3 molecules are able to interact with and thus inhibit viral mRNAs. Has a cytoplasmic role early in development as part of a ribonucleoprotein (mRNP) complex which may regulate mRNA transport and/or translation. Following nuclear localization at the mid-blastula transition, acts as a transcription factor and binds the 5'-CCAAT-3' promoter sequence to regulate transcription of the gata2 gene as a subunit of the CCAAT box transcription factor (CBTF). Its role as an mRNP component negatively regulates its activity as a transcription factor by precluding its nuclear localization. This Xenopus tropicalis (Western clawed frog) protein is Interleukin enhancer-binding factor 3.